Here is a 591-residue protein sequence, read N- to C-terminus: Aspartate--tRNA(Asp/Asn) ligase (591 aa).

Glu-175 is a binding site for L-aspartate. Positions Gln-199–Lys-202 are aspartate. Residues Arg-221 and His-450 each coordinate L-aspartate. Residue Arg-221–Glu-223 coordinates ATP. Glu-484 serves as a coordination point for ATP. Arg-491 contributes to the L-aspartate binding site. Gly-536–Arg-539 serves as a coordination point for ATP.

This sequence belongs to the class-II aminoacyl-tRNA synthetase family. Type 1 subfamily. Homodimer.

It localises to the cytoplasm. The catalysed reaction is tRNA(Asx) + L-aspartate + ATP = L-aspartyl-tRNA(Asx) + AMP + diphosphate. Aspartyl-tRNA synthetase with relaxed tRNA specificity since it is able to aspartylate not only its cognate tRNA(Asp) but also tRNA(Asn). Reaction proceeds in two steps: L-aspartate is first activated by ATP to form Asp-AMP and then transferred to the acceptor end of tRNA(Asp/Asn). The sequence is that of Aspartate--tRNA(Asp/Asn) ligase from Rhodopseudomonas palustris (strain TIE-1).